The sequence spans 2839 residues: Neurofibromin (2839 aa).

Alanine 2 bears the N-acetylalanine mark. Phosphoserine is present on residues serine 864 and serine 876. Positions 1251–1482 (HLLYQLLWNM…DAARRFFLDI (232 aa)) constitute a Ras-GAP domain. The region spanning 1580–1738 (EKEEFKALKT…ATLALEEDLK (159 aa)) is the CRAL-TRIO domain. The tract at residues 1580 to 1837 (EKEEFKALKT…RTRWELSQPD (258 aa)) is lipid binding. Phosphoserine is present on residues serine 2188 and serine 2467. Threonine 2514 carries the post-translational modification Phosphothreonine. Phosphoserine is present on residues serine 2515, serine 2521, serine 2523, and serine 2543. Positions 2555–2571 (KRQEMESGITTPPKMRR) match the Bipartite nuclear localization signal motif. Position 2565 is a phosphothreonine (threonine 2565). Serine 2597, serine 2802, and serine 2817 each carry phosphoserine. Residues 2787–2839 (TSQHSPGIDKENVELSPTTGHCNSGRTRHGSASQVQKQRSAGSFKRNSIKKIV) are disordered. Residues 2801-2827 (LSPTTGHCNSGRTRHGSASQVQKQRSA) show a composition bias toward polar residues.

Interacts with HTR6. Interacts with SPRED2. Post-translationally, ubiquitinated by RNF7/RBX2, leading to its degradation. In terms of tissue distribution, detected in brain, peripheral nerve, lung, colon and muscle.

The protein resides in the nucleus. It is found in the nucleolus. Its subcellular location is the cell membrane. Stimulates the GTPase activity of Ras. NF1 shows greater affinity for Ras GAP, but lower specific activity. May be a regulator of Ras activity. The polypeptide is Neurofibromin (NF1) (Homo sapiens (Human)).